The following is a 1159-amino-acid chain: Caspase recruitment domain-containing protein 11 (1159 aa).

Positions 18–110 (EEEALWDNVE…ELYKLVTGKE (93 aa)) constitute a CARD domain. Residues 111–128 (PTRRFSTIVVEEGHEGLT) form a linker region. Residues 176–449 (FQERYYKMKE…KDNGSLDQSL (274 aa)) adopt a coiled-coil conformation. The interval 441-496 (DNGSLDQSLPRHLPATIISQNLGDTSPRTNGQEADDSSTSEESPEDSKYFLPYHPP) is disordered. 2 positions are modified to phosphoserine: Ser-448 and Ser-466. An inhibitory domain (ID) region spans residues 450–671 (PRHLPATIIS…GHVRGTGPLV (222 aa)). Over residues 457-472 (IISQNLGDTSPRTNGQ) the composition is skewed to polar residues. Acidic residues predominate over residues 473–484 (EADDSSTSEESP). A phosphoserine mark is found at Ser-512 and Ser-540. The disordered stretch occupies residues 532–578 (HEEDFTDGSPSSSRSLPVTSSFSKMQPHRSRSSIMSITAEPPGNDSI). Positions 540 to 554 (SPSSSRSLPVTSSFS) are enriched in low complexity. Ser-564 is modified (phosphoserine; by PKC/PRKCB and PKC/PRKCQ). Ser-598 carries the phosphoserine modification. Positions 610–631 (NHERYSFGPPSIHSSSSSHQSE) are disordered. Positions 620-630 (SIHSSSSSHQS) are enriched in low complexity. 2 positions are modified to phosphoserine; by PKC/PRKCB and PKC/PRKCQ: Ser-649 and Ser-657. Residues 672–760 (QHTTLNGDGL…LITLHYKVNH (89 aa)) enclose the PDZ domain. Ser-891 and Ser-930 each carry phosphoserine. The Guanylate kinase-like domain maps to 978–1145 (RRRPVLFTPT…LLRVLKDKIV (168 aa)).

As to quaternary structure, homodimer; disulfide-linked. Homomultimer; polymerizes following activation, forming a nucleating helical template that seeds BCL10-filament formation via a CARD-CARD interaction. Interacts (via CARD domain) with BCL10 (via CARD domain); interaction takes place following CARD11 activation and polymerization, leading to the formation of a filamentous CBM complex assembly. Component of a CBM complex (CARD11-BCL10-MALT1) complex involved in NF-kappa-B activation. Found in a membrane raft complex, at least composed of BCL10, CARD11, DPP4 and IKBKB. Interacts (via PDZ domain) with DPP4 (via cytoplasmic tail). In terms of processing, phosphorylation at Ser-564, Ser-649 and Ser-657 by PRKCB and PRKCQ leads to a shift from an inactive to an active form that activates the NF-kappa-B signaling.

It localises to the cytoplasm. Its subcellular location is the membrane raft. Maintained in an autoinhibited state via homodimerization in which the CARD domain forms an extensive interaction with the adjacent linker and coiled-coil regions. Activation downstream of T-cell receptor (TCR) by phosphorylation by PRKCB and PRKCQ triggers CARD11 homooligomerization and BCL10 recruitment, followed by activation of NF-kappa-B. Functionally, adapter protein that plays a key role in adaptive immune response by transducing the activation of NF-kappa-B downstream of T-cell receptor (TCR) and B-cell receptor (BCR) engagement. Transduces signals downstream TCR or BCR activation via the formation of a multiprotein complex together with BCL10 and MALT1 that induces NF-kappa-B and MAP kinase p38 (MAPK11, MAPK12, MAPK13 and/or MAPK14) pathways. Upon activation in response to TCR or BCR triggering, CARD11 homooligomerizes to form a nucleating helical template that recruits BCL10 via CARD-CARD interaction, thereby promoting polymerization of BCL10 and subsequent recruitment of MALT1: this leads to I-kappa-B kinase (IKK) phosphorylation and degradation, and release of NF-kappa-B proteins for nuclear translocation. Its binding to DPP4 induces T-cell proliferation and NF-kappa-B activation in a T-cell receptor/CD3-dependent manner. Promotes linear ubiquitination of BCL10 by promoting the targeting of BCL10 to RNF31/HOIP. Stimulates the phosphorylation of BCL10. Also activates the TORC1 signaling pathway. In Mus musculus (Mouse), this protein is Caspase recruitment domain-containing protein 11.